The chain runs to 938 residues: Leucine--tRNA ligase 1 (938 aa).

Positions 40–50 (PYTNSPLHIGH) match the 'HIGH' region motif. Residues 620–624 (KMSKS) carry the 'KMSKS' region motif. Lysine 623 lines the ATP pocket.

The protein belongs to the class-I aminoacyl-tRNA synthetase family.

It localises to the cytoplasm. It carries out the reaction tRNA(Leu) + L-leucine + ATP = L-leucyl-tRNA(Leu) + AMP + diphosphate. This Metallosphaera sedula (strain ATCC 51363 / DSM 5348 / JCM 9185 / NBRC 15509 / TH2) protein is Leucine--tRNA ligase 1.